The following is a 124-amino-acid chain: Small ribosomal subunit protein uS13 (124 aa).

The segment at 98–124 (VRGQRTRCNARTRKGPRKTVGAKRKEK) is disordered.

It belongs to the universal ribosomal protein uS13 family. As to quaternary structure, part of the 30S ribosomal subunit. Forms a loose heterodimer with protein S19. Forms two bridges to the 50S subunit in the 70S ribosome.

In terms of biological role, located at the top of the head of the 30S subunit, it contacts several helices of the 16S rRNA. In the 70S ribosome it contacts the 23S rRNA (bridge B1a) and protein L5 of the 50S subunit (bridge B1b), connecting the 2 subunits; these bridges are implicated in subunit movement. Contacts the tRNAs in the A and P-sites. This is Small ribosomal subunit protein uS13 from Dictyoglomus turgidum (strain DSM 6724 / Z-1310).